The sequence spans 299 residues: MEEFDSEDFSTSEEDEDYVPSGGEYSEDDVNELVKEDEVDGEEQTQKTQGKKRKAQSIPARKRRQGGLSLEEEEEEDANSESEGSSSEEEDDAAEQEKGIGSEDARKKKEDELWASFLNDVGPKSKVPPSTQVKKGEETEETSSSKLLVKAEELEKPKETEKVKITKVFDFAGEEVRVTKEVDATSKEAKSFFKQNEKEKPQANVPSALPSLPAGSGLKRSSGMSSLLGKIGAKKQKMSTLEKSKLDWESFKEEEGIGEELAIHNRGKEGYIERKAFLDRVDHRQFEIERDLRLSKMKP.

Composition is skewed to acidic residues over residues Met1–Tyr18 and Tyr25–Glu43. Disordered regions lie at residues Met1–Lys156 and Phe192–Met224. The segment covering Gln49–Gln65 has biased composition (basic residues). Acidic residues predominate over residues Leu70–Ala94. Phosphoserine is present on residues Ser82, Ser85, and Ser86. A compositionally biased stretch (basic and acidic residues) spans Glu95–Glu112. At Ser116 the chain carries Phosphoserine. Lys150 is covalently cross-linked (Glycyl lysine isopeptide (Lys-Gly) (interchain with G-Cter in SUMO2)). The hydrophilic stretch occupies residues Val178 to Gly217. Basic and acidic residues predominate over residues Phe192–Pro201. The residue at position 216 (Ser216) is a Phosphoserine. A BCNT-C domain is found at Leu218–Pro299. Lys219 carries the post-translational modification N6-methyllysine. Ser250 is subject to Phosphoserine.

In terms of processing, phosphorylated by CK2 (casein kinase II) in vitro. Ubiquitous.

Its subcellular location is the chromosome. It localises to the centromere. The protein localises to the kinetochore. Its function is as follows. May play a role during embryogenesis. This Homo sapiens (Human) protein is Craniofacial development protein 1 (CFDP1).